A 74-amino-acid polypeptide reads, in one-letter code: Guanine nucleotide-binding protein G(T) subunit gamma-T1 (74 aa).

Residue cysteine 71 is modified to Cysteine methyl ester. The S-farnesyl cysteine moiety is linked to residue cysteine 71. A propeptide spans valine 72–serine 74 (removed in mature form).

It belongs to the G protein gamma family. In terms of assembly, g proteins are composed of 3 units, alpha, beta and gamma. As to expression, retinal rod outer segment.

It localises to the cell membrane. In terms of biological role, guanine nucleotide-binding proteins (G proteins) are involved as a modulator or transducer in various transmembrane signaling systems. The beta and gamma chains are required for the GTPase activity, for replacement of GDP by GTP, and for G protein-effector interaction. The polypeptide is Guanine nucleotide-binding protein G(T) subunit gamma-T1 (GNGT1) (Bos taurus (Bovine)).